The following is a 173-amino-acid chain: Photosystem I assembly protein Ycf3 (173 aa).

TPR repeat units follow at residues 35–68 (AFVY…EEDP), 72–105 (SYIL…NPRM), and 120–153 (GEKA…APNN).

This sequence belongs to the Ycf3 family.

The protein resides in the cellular thylakoid membrane. Essential for the assembly of the photosystem I (PSI) complex. May act as a chaperone-like factor to guide the assembly of the PSI subunits. This is Photosystem I assembly protein Ycf3 from Rippkaea orientalis (strain PCC 8801 / RF-1) (Cyanothece sp. (strain PCC 8801)).